The primary structure comprises 148 residues: Large ribosomal subunit protein uL15 (148 aa).

Residues 18–38 (GYGRVGKHRKHPGGRGNAGGL) form a disordered region.

This sequence belongs to the universal ribosomal protein uL15 family.

In Dictyostelium discoideum (Social amoeba), this protein is Large ribosomal subunit protein uL15 (rpl27a).